The chain runs to 213 residues: Cytochrome c biogenesis ATP-binding export protein CcmA (213 aa).

Positions 3–211 constitute an ABC transporter domain; it reads LTAENLGVRR…QMTGFAGVET (209 aa). 35–42 provides a ligand contact to ATP; that stretch reads GRNGSGKS.

The protein belongs to the ABC transporter superfamily. CcmA exporter (TC 3.A.1.107) family. The complex is composed of two ATP-binding proteins (CcmA) and two transmembrane proteins (CcmB).

It localises to the cell inner membrane. It catalyses the reaction heme b(in) + ATP + H2O = heme b(out) + ADP + phosphate + H(+). Part of the ABC transporter complex CcmAB involved in the biogenesis of c-type cytochromes; once thought to export heme, this seems not to be the case, but its exact role is uncertain. Responsible for energy coupling to the transport system. This is Cytochrome c biogenesis ATP-binding export protein CcmA from Agrobacterium fabrum (strain C58 / ATCC 33970) (Agrobacterium tumefaciens (strain C58)).